A 147-amino-acid polypeptide reads, in one-letter code: NADH-ubiquinone oxidoreductase chain 3 (147 aa).

A run of 3 helical transmembrane segments spans residues 6–26 (LFILFVSIIALLFLLINLVFA), 60–80 (AICFVILDLEIFTMFPYVGSL), and 84–104 (TFYSLVVILGFMFVVSAGFVF).

Belongs to the complex I subunit 3 family.

The protein localises to the mitochondrion membrane. The catalysed reaction is a ubiquinone + NADH + 5 H(+)(in) = a ubiquinol + NAD(+) + 4 H(+)(out). Functionally, core subunit of the mitochondrial membrane respiratory chain NADH dehydrogenase (Complex I) that is believed to belong to the minimal assembly required for catalysis. Complex I functions in the transfer of electrons from NADH to the respiratory chain. The immediate electron acceptor for the enzyme is believed to be ubiquinone. The sequence is that of NADH-ubiquinone oxidoreductase chain 3 (ndh-3) from Neurospora crassa (strain ATCC 24698 / 74-OR23-1A / CBS 708.71 / DSM 1257 / FGSC 987).